Consider the following 28-residue polypeptide: VTXEEGXYSISDQSKVGEQXIRSPDREM.

The interval 1–28 (VTXEEGXYSISDQSKVGEQXIRSPDREM) is disordered.

The sequence is that of Seed allergenic protein 1 from Prunus dulcis (Almond).